The primary structure comprises 183 residues: Capsid protein (183 aa).

A disordered region spans residues 136-183; sequence NAPILSTLPETTVVRRRGRSPRRRTPSPRRRRSQSPRRRRSQSRESQC. Over residues 149–176 the composition is skewed to basic residues; that stretch reads VRRRGRSPRRRTPSPRRRRSQSPRRRRS. Phosphoserine; by host occurs at positions 155, 162, and 170. The stretch at 155 to 161 is one 1; half-length repeat; that stretch reads SPRRRTP. Residues 155-177 are 3 X 8 AA repeats of S-P-R-R-R-[PR]-S-Q; it reads SPRRRTPSPRRRRSQSPRRRRSQ. The Bipartite nuclear localization signal signature appears at 158–175; it reads RRTPSPRRRRSQSPRRRR. A run of 2 repeats spans residues 162 to 169 and 170 to 177. Residues 177 to 183 form an RNA binding region; the sequence is QSRESQC.

This sequence belongs to the orthohepadnavirus core antigen family. As to quaternary structure, homodimerizes, then multimerizes. Interacts with cytosol exposed regions of viral L glycoprotein present in the reticulum-to-Golgi compartment. Interacts with human FLNB. Phosphorylated form interacts with host importin alpha; this interaction depends on the exposure of the NLS, which itself depends upon genome maturation and/or phosphorylation of the capsid protein. Interacts with host NUP153. Phosphorylated by host SRPK1, SRPK2, and maybe protein kinase C or GAPDH. Phosphorylation is critical for pregenomic RNA packaging. Protein kinase C phosphorylation is stimulated by HBx protein and may play a role in transport of the viral genome to the nucleus at the late step during the viral replication cycle.

The protein resides in the virion. Its subcellular location is the host cytoplasm. Functionally, self assembles to form an icosahedral capsid. Most capsids appear to be large particles with an icosahedral symmetry of T=4 and consist of 240 copies of capsid protein, though a fraction forms smaller T=3 particles consisting of 180 capsid proteins. Entering capsids are transported along microtubules to the nucleus. Phosphorylation of the capsid is thought to induce exposure of nuclear localization signal in the C-terminal portion of the capsid protein that allows binding to the nuclear pore complex via the importin (karyopherin-) alpha and beta. Capsids are imported in intact form through the nuclear pore into the nuclear basket, where it probably binds NUP153. Only capsids that contain the mature viral genome can release the viral DNA and capsid protein into the nucleoplasm. Immature capsids get stuck in the basket. Capsids encapsulate the pre-genomic RNA and the P protein. Pre-genomic RNA is reverse-transcribed into DNA while the capsid is still in the cytoplasm. The capsid can then either be directed to the nucleus, providing more genomes for transcription, or bud through the endoplasmic reticulum to provide new virions. This chain is Capsid protein, found in Homo sapiens (Human).